We begin with the raw amino-acid sequence, 330 residues long: Clp protease adapter protein ClpF, chloroplastic (330 aa).

Residues 1–65 (MVQSQSLSTL…KSLKQRNLLR (65 aa)) constitute a chloroplast transit peptide. Residues 66–138 (VEARWPFQGG…VEEESIRLQE (73 aa)) are NTD, required for CLPS1-binding. Coiled-coil stretches lie at residues 112 to 139 (NLEQYDIAQQLREKLTEVEEESIRLQEG) and 175 to 195 (AAKLRDEISKLEAESLAVSAK). Residues 153–188 (GISIIRLRADLQNAIDSEDYGLAAKLRDEISKLEAE) form the UVR domain. Positions 203-310 (EYAFRLGQKL…TAGDFIPVKQ (108 aa)) are yccV-like.

As to quaternary structure, binds to CLPC1 and CLPC2. Interacts with ClpS1; this interaction stimulates their association with ClpC. Associates with the Clp substrate HEMA1 (GluTR). In terms of tissue distribution, expressed constitutively in photosynthetic tissues such as leaves, stems and flowers, and, at low levels, in siliques.

Its subcellular location is the plastid. The protein resides in the chloroplast. Its function is as follows. Clp protease adapter that facilitates CLPS1 recruitment to ClpC chaperones thus forming a binary adapter for selective substrate recognition and delivery to plastid Clp protease system (CLPC). The sequence is that of Clp protease adapter protein ClpF, chloroplastic from Arabidopsis thaliana (Mouse-ear cress).